The chain runs to 357 residues: Phenylalanine--tRNA ligase alpha subunit (357 aa).

Glu257 serves as a coordination point for Mg(2+).

Belongs to the class-II aminoacyl-tRNA synthetase family. Phe-tRNA synthetase alpha subunit type 1 subfamily. As to quaternary structure, tetramer of two alpha and two beta subunits. Mg(2+) is required as a cofactor.

It localises to the cytoplasm. It catalyses the reaction tRNA(Phe) + L-phenylalanine + ATP = L-phenylalanyl-tRNA(Phe) + AMP + diphosphate + H(+). This is Phenylalanine--tRNA ligase alpha subunit from Roseobacter denitrificans (strain ATCC 33942 / OCh 114) (Erythrobacter sp. (strain OCh 114)).